A 506-amino-acid chain; its full sequence is Parthenolide synthase (506 aa).

The chain crosses the membrane as a helical span at residues 10–30 (LFLPTLCTILISYIIIKYVLI). Residues N32, N63, N121, N168, and N175 are each glycosylated (N-linked (GlcNAc...) asparagine). A helical membrane pass occupies residues 301–321 (LLLNVLLGAIDTTFTTIVWAM). C448 is a heme binding site.

This sequence belongs to the cytochrome P450 family.

Its subcellular location is the membrane. The catalysed reaction is (+)-costunolide + reduced [NADPH--hemoprotein reductase] + O2 = parthenolide + oxidized [NADPH--hemoprotein reductase] + H2O + H(+). It functions in the pathway secondary metabolite biosynthesis; terpenoid biosynthesis. Involved in the biosynthesis of germacrene-derived sesquiterpene lactones. Component of the parthenolide biosynthetic pathway; parthenolide and conjugates are promising anti-cancer drugs highly active against colon cancer cells. Catalyzes the conversion of costunolide to parthenolide. In Tanacetum parthenium (Feverfew), this protein is Parthenolide synthase.